The primary structure comprises 380 residues: Lipid-A-disaccharide synthase (380 aa).

Belongs to the LpxB family.

It catalyses the reaction a lipid X + a UDP-2-N,3-O-bis[(3R)-3-hydroxyacyl]-alpha-D-glucosamine = a lipid A disaccharide + UDP + H(+). It functions in the pathway bacterial outer membrane biogenesis; LPS lipid A biosynthesis. In terms of biological role, condensation of UDP-2,3-diacylglucosamine and 2,3-diacylglucosamine-1-phosphate to form lipid A disaccharide, a precursor of lipid A, a phosphorylated glycolipid that anchors the lipopolysaccharide to the outer membrane of the cell. This is Lipid-A-disaccharide synthase from Photobacterium profundum (strain SS9).